A 343-amino-acid chain; its full sequence is NADH-quinone oxidoreductase subunit H (343 aa).

8 helical membrane-spanning segments follow: residues 5–25 (FIIE…LMAM), 76–96 (FLFV…SAVI), 119–139 (ALLY…IGGW), 158–178 (VSYE…TGTL), 190–210 (MNWN…CAFA), 243–263 (LFAE…LFFG), 284–304 (ILGF…YMWV), and 323–343 (ILIP…LLFK).

This sequence belongs to the complex I subunit 1 family. In terms of assembly, NDH-1 is composed of 14 different subunits. Subunits NuoA, H, J, K, L, M, N constitute the membrane sector of the complex.

The protein localises to the cell inner membrane. It catalyses the reaction a quinone + NADH + 5 H(+)(in) = a quinol + NAD(+) + 4 H(+)(out). NDH-1 shuttles electrons from NADH, via FMN and iron-sulfur (Fe-S) centers, to quinones in the respiratory chain. The immediate electron acceptor for the enzyme in this species is believed to be ubiquinone. Couples the redox reaction to proton translocation (for every two electrons transferred, four hydrogen ions are translocated across the cytoplasmic membrane), and thus conserves the redox energy in a proton gradient. This subunit may bind ubiquinone. This chain is NADH-quinone oxidoreductase subunit H, found in Flavobacterium psychrophilum (strain ATCC 49511 / DSM 21280 / CIP 103535 / JIP02/86).